The chain runs to 159 residues: MPSFDVVSELDKHEVTNAVDNAIKELDRRYDLRGKGSFEFKDKTLTLTAEADFMLEQMIEILKLALIKRKVDIQCLEYKDSYASGKVVKQEVILREGIDKDLAKKIVALIKDSKLKVQAAIQGEQVRITGKKRDDLQEAIALLRGQELGMPLQFNNFRD.

It belongs to the YajQ family.

In terms of biological role, nucleotide-binding protein. This chain is Nucleotide-binding protein Avin_13410, found in Azotobacter vinelandii (strain DJ / ATCC BAA-1303).